Consider the following 2115-residue polypeptide: Non-reducing polyketide synthase ascC (2115 aa).

The interval 1–21 (MTLIQTKHSASAAVFSPQSTA) is disordered. The N-terminal acylcarrier protein transacylase domain (SAT) stretch occupies residues 14 to 260 (VFSPQSTAPK…HNSRNTELAQ (247 aa)). Residues 381–805 (PDSIAIVGSA…GSNSALICSE (425 aa)) enclose the Ketosynthase family 3 (KS3) domain. Catalysis depends on for beta-ketoacyl synthase activity residues cysteine 553, histidine 689, and histidine 728. The segment at 908-1210 (LTFSGQSRTT…ANPSAHTFQA (303 aa)) is malonyl-CoA:ACP transacylase (MAT) domain. The For acyl/malonyl transferase activity role is filled by serine 995. The N-terminal hotdog fold stretch occupies residues 1280–1406 (PKKVQQLVTL…GDFFATSGEM (127 aa)). Positions 1280 to 1581 (PKKVQQLVTL…FMRIKAAKLE (302 aa)) constitute a PKS/mFAS DH domain. Residues 1285 to 1580 (QLVTLKKTEG…QFMRIKAAKL (296 aa)) form a product template (PT) domain region. The Proton acceptor; for dehydratase activity role is filled by histidine 1315. A C-terminal hotdog fold region spans residues 1428 to 1581 (DAERLRTATA…FMRIKAAKLE (154 aa)). Aspartate 1492 acts as the Proton donor; for dehydratase activity in catalysis. Residues 1587–1624 (ANPGSKTKSTNGNALPSVPRSVPAGPTSAPQQVAPTTM) form a disordered region. Residues 1588 to 1600 (NPGSKTKSTNGNA) show a composition bias toward polar residues. Residues 1640–1724 (PSKIADLKSL…PTAALTEGLV (85 aa)) enclose the Carrier domain. Position 1674 is an O-(pantetheine 4'-phosphoryl)serine (serine 1674). Residues 1734 to 1748 (SDSIRNSTGFHTTIP) show a composition bias toward polar residues. The tract at residues 1734 to 1767 (SDSIRNSTGFHTTIPATPAELHSNPPDSLDGSTV) is disordered. Residues 1777–2107 (ARFKLDTMVY…YDFLLGELEN (331 aa)) are thioesterase (TE) domain. Active-site for thioesterase activity residues include serine 1897 and aspartate 2045.

It carries out the reaction 3 malonyl-CoA + acetyl-CoA + 2 H(+) = orsellinate + 3 CO2 + 4 CoA. The protein operates within secondary metabolite biosynthesis; terpenoid biosynthesis. Non-reducing polyketide synthase; part of the asc-1 gene cluster that mediates the biosynthesis of both ascochlorin and ascofuranone, a strong inhibitor of cyanide-insensitive alternative oxidases and a promising drug candidate against African trypanosomiasis. The first step in the pathway is performed by the non-reducing polyketide synthase ascC that produces orsellinic acid by condensing acetyl-CoA with 3 malonyl-CoA units. Orsellinic acid is then prenylated by the prenyltransferase ascA to yield ilicicolinic acid B. Ilicicolinic acid B is further reduced to ilicicolin B by the reductase ascB. The halogenase ascD then chlorinates ilicicolin B to produce ilicicolin A which is converted to ilicicolin A epoxide by the cytochrome P450 monooxygenase ascE that catalyzes stereoselective epoxidation of the terminal double bond of the prenyl group. Ilicicolin A epoxide is the last common precursor for the biosynthesis of ascofuranone and ascochlorin. The terpene cyclase ascF produces a monocyclic terpene, and the cyclization reaction is proposed to be initiated by protonation of the terminal epoxide of ilicicolin A epoxide to generate a monocyclic tertiarycation, which is followed by a series of hydride and methyl shifts with abstraction of proton, leading to the formation of the (14S,15R,19R)-trimethylcyclohexanone ring structure of ilicicolin C, which is finally reduced to ascochlorin by the dehydrogenase ascG. On the other hand, ilicicolin A epoxide is hydroxylated by the cytochrome P450 monooxygenase ascH, and the resultant product is cyclized by the terpene cyclase ascI to ascofuranol via protonation-initiated epoxide ring opening, which facilitates the 6-endo-tet cyclization to form the tetrahy-drofuran ring. Finally, ascofuranol is oxidized into ascofuranone by ascJ. In Acremonium egyptiacum (Oospora egyptiaca), this protein is Non-reducing polyketide synthase ascC.